Reading from the N-terminus, the 248-residue chain is Pulmonary surfactant-associated protein A1 (248 aa).

The signal sequence occupies residues 1–20 (MWLCPLALNLILMAASGAVC). Residues 28 to 100 (GSPGIPGTPG…PGERGPPGLP (73 aa)) form the Collagen-like domain. A 4-hydroxyproline mark is found at Pro30, Pro33, Pro36, Pro42, Pro54, Pro57, Pro63, Pro67, and Pro70. The interval 31-101 (GIPGTPGSHG…GERGPPGLPA (71 aa)) is disordered. Residues 42 to 51 (PGRDGRDGLK) are compositionally biased toward basic and acidic residues. Positions 54 to 70 (PGPPGPMGPPGEMPCPP) are enriched in pro residues. In terms of domain architecture, C-type lectin spans 132-248 (MTVGEKVFSS…LYSRLTICEF (117 aa)). 2 disulfide bridges follow: Cys155-Cys246 and Cys224-Cys238. N-linked (GlcNAc...) asparagine glycosylation is present at Asn207.

Belongs to the SFTPA family. Oligomeric complex of 6 set of homotrimers. Interacts with CD93. As to quaternary structure, (Microbial infection) Binds M.bovis cell surface protein Apa via its glycosylated sites; probably also recognizes other bacterial moieties. In terms of assembly, (Microbial infection) Binds to the S.aureus extracellular adherence protein, Eap, thereby enhancing phagocytosis and killing of S.aureus by alveolar macrophages. (Microbial infection) Interacts with M.pneumoniae CARDS toxin; CARDS probably uses this protein as a receptor. Post-translationally, N-acetylated.

Its subcellular location is the secreted. It is found in the extracellular space. It localises to the extracellular matrix. The protein resides in the surface film. Its function is as follows. In presence of calcium ions, it binds to surfactant phospholipids and contributes to lower the surface tension at the air-liquid interface in the alveoli of the mammalian lung and is essential for normal respiration. Enhances the expression of MYO18A/SP-R210 on alveolar macrophages. Functionally, (Microbial infection) Recognition of M.tuberculosis by dendritic cells may occur partially via this molecule. Can recognize, bind, and opsonize pathogens to enhance their elimination by alveolar macrophages. (Microbial infection) Binds M.pneumoniae CARDS toxin, serves as one receptor for this pathogen. When SFTPA1 is down-regulated by siRNA, less toxin binds to human cells and less vacuolization (a symptom of M.pneumoniae infection) is seen. The protein is Pulmonary surfactant-associated protein A1 (SFTPA1) of Homo sapiens (Human).